Consider the following 202-residue polypeptide: Protein cuti-1 (202 aa).

Residues 1–37 (MPNDRVAPLPPNFVYSPHDKFYYAPATCNSMHYTTAS) lie on the Cytoplasmic side of the membrane. Residues 38 to 58 (YISAFIEFLVMGTGAICFYVM) traverse the membrane as a helical segment. Over 59–68 (SHKSDSIGKW) the chain is Extracellular. Residues 69–89 (LFYIQAGITVLSLLTSALMAF) traverse the membrane as a helical segment. The Cytoplasmic portion of the chain corresponds to 90 to 107 (GLWKENPQMLGSKLKFIE). A helical transmembrane segment spans residues 108 to 128 (FIICFLLIWAVISIVCMAFGI). Residues 129 to 148 (QFTRQVFGIFGKVHRIEQDY) lie on the Extracellular side of the membrane. Residues 149–169 (GPIWPFNIAVVSFFTAAIAIW) form a helical membrane-spanning segment. Residues 170–202 (TRIIIQGAADYLYDKAYFADKQNVELRESSKTR) are Cytoplasmic-facing.

Interacts with vps-39.

The protein resides in the cell membrane. The protein localises to the cytoplasm. Involved in cuticle formation and ensures cuticle shedding during larval development. Plays a role in maintaining the hypodermis. In association with vps-39, may play a role in vesicle tethering. The polypeptide is Protein cuti-1 (Caenorhabditis elegans).